The chain runs to 428 residues: Glucose-1-phosphate adenylyltransferase (428 aa).

Alpha-D-glucose 1-phosphate-binding positions include Tyr-99, Gly-164, 179 to 180 (EK), and Ser-190.

This sequence belongs to the bacterial/plant glucose-1-phosphate adenylyltransferase family. As to quaternary structure, homotetramer.

It carries out the reaction alpha-D-glucose 1-phosphate + ATP + H(+) = ADP-alpha-D-glucose + diphosphate. It participates in glycan biosynthesis; glycogen biosynthesis. Its function is as follows. Involved in the biosynthesis of ADP-glucose, a building block required for the elongation reactions to produce glycogen. Catalyzes the reaction between ATP and alpha-D-glucose 1-phosphate (G1P) to produce pyrophosphate and ADP-Glc. This is Glucose-1-phosphate adenylyltransferase from Thermomicrobium roseum (strain ATCC 27502 / DSM 5159 / P-2).